The primary structure comprises 404 residues: Phosphoglycerate kinase (404 aa).

Substrate contacts are provided by residues aspartate 22–asparagine 24, arginine 37, histidine 60–arginine 63, arginine 120, and arginine 160. ATP contacts are provided by residues lysine 215, glutamate 333, and glycine 360 to serine 363.

It belongs to the phosphoglycerate kinase family. As to quaternary structure, monomer.

Its subcellular location is the cytoplasm. It catalyses the reaction (2R)-3-phosphoglycerate + ATP = (2R)-3-phospho-glyceroyl phosphate + ADP. The protein operates within carbohydrate degradation; glycolysis; pyruvate from D-glyceraldehyde 3-phosphate: step 2/5. This chain is Phosphoglycerate kinase, found in Latilactobacillus sakei subsp. sakei (strain 23K) (Lactobacillus sakei subsp. sakei).